The following is an 883-amino-acid chain: DNA mismatch repair protein MutS (883 aa).

619 to 626 lines the ATP pocket; the sequence is GPNMGGKS.

Belongs to the DNA mismatch repair MutS family.

Functionally, this protein is involved in the repair of mismatches in DNA. It is possible that it carries out the mismatch recognition step. This protein has a weak ATPase activity. The chain is DNA mismatch repair protein MutS from Marinomonas sp. (strain MWYL1).